Reading from the N-terminus, the 296-residue chain is Coiled-coil domain-containing protein 69 (296 aa).

Residues 1–18 (MGCRHSRLSSCKPPKKKR) show a composition bias toward basic residues. The interval 1–41 (MGCRHSRLSSCKPPKKKRQEPEPEQPPRPEPHELGPLNGDT) is disordered. The N-myristoyl glycine moiety is linked to residue Gly-2. Positions 19–33 (QEPEPEQPPRPEPHE) are enriched in basic and acidic residues. The stretch at 48 to 272 (CASEEAERHQ…QEKEELLYRV (225 aa)) forms a coiled coil. Residues Ser-154 and Ser-241 each carry the phosphoserine modification.

Belongs to the CCDC69 family. In terms of tissue distribution, highly expressed in duodenum, esophagus, pancreas, prostate, salivary gland, thymus and urinary bladder.

The protein resides in the cytoplasm. Its subcellular location is the cytoskeleton. It localises to the spindle. The protein localises to the midbody. Its function is as follows. May act as a scaffold to regulate the recruitment and assembly of spindle midzone components. Required for the localization of AURKB and PLK1 to the spindle midzone. This Homo sapiens (Human) protein is Coiled-coil domain-containing protein 69.